Reading from the N-terminus, the 105-residue chain is Large ribosomal subunit protein bL21c (105 aa).

Belongs to the bacterial ribosomal protein bL21 family. As to quaternary structure, part of the 50S ribosomal subunit.

The protein localises to the plastid. It is found in the chloroplast. Functionally, this protein binds to 23S rRNA. In Trieres chinensis (Marine centric diatom), this protein is Large ribosomal subunit protein bL21c.